A 406-amino-acid polypeptide reads, in one-letter code: MKYPTLLDRFLVYVKENTRSDENSTTTPSTQNQVEFAQNILLPEMERIGLQNVHYLPNGFAVGTLPANDPSLTRKIGFIAHMDTADFNAEGVNPQIIENYDGNPIALGTSGYELHPKDFPQLANYHGQILITTDGTTLLGSDDKSGIAEIMTAIEFLIQNPDIKHCEIRVGFGPDEEIGVGADKFDVKDFDVDFAYTMDGGPLGELQYETFSAAGAKIDFLGRNVHPGSAKDQMINAFQMAIDFHNALPETDRPEKTEGYEGFFHLMNMEGSVDTASTTYIIRDFEEEDFQARKQLMLDIAEKMNANFDTPRVIVNLHDQYYNMKKIIEKDMTPINIAKDVMENLGIKPLIEPVRGGTDGSKISFMGIPTPNIFAGGENMHGRFEFVSLETMEKAVDVILGIVAYK.

A Zn(2+)-binding site is contributed by H81. D83 is a catalytic residue. Zn(2+) is bound at residue D142. Residue E176 is the Proton acceptor of the active site. The Zn(2+) site is built by E177, D199, and H381.

This sequence belongs to the peptidase M20B family. It depends on Zn(2+) as a cofactor.

It is found in the cytoplasm. The enzyme catalyses Release of the N-terminal residue from a tripeptide.. Functionally, cleaves the N-terminal amino acid of tripeptides. This is Peptidase T from Streptococcus suis (strain 98HAH33).